The following is a 556-amino-acid chain: MMNKLYIGNLSPAVTVDDLRQLFGDRKLPLAGQVLLKSGYAFVDYPDQNWAIRAIETLSGKVELHGKIMEVDYSVSKKLRSRKIQIRNIPPHLQWEVLDGLLAQYGTVENVEQVNTDTETAVVNVTYATREEAKIAVEKLSGHQFENYSFKISYIPDEEVSSPSPPQRAQRGDHSSREQGHAPGGTSQARQIDFPLRILVPTQFVGAIIGKEGLTIKNITKQTQSRVDIHRKENSGAAEKPVTIHATPEGTSEACRMILEIMQKEADETKLAEEIPLKILAHNGLVGRLIGKEGRNLKKIEHETGTKITISSLQDLSIYNPERTITVKGTVEACASAEIEIMKKLREAFENDMLAVNTHSGYFSSLYPHHQFGPFPHHHSYPEQEIVNLFIPTQAVGAIIGKKGAHIKQLARFAGASIKIAPAEGPDVSERMVIITGPPEAQFKAQGRIFGKLKEENFFNPKEEVKLEAHIRVPSSTAGRVIGKGGKTVNELQNLTSAEVIVPRDQTPDENEEVIVRIIGHFFASQTAQRKIREIVQQVKQQEQKYPQGVASQCSK.

RRM domains lie at 3-76 and 82-157; these read NKLY…YSVS and RKIQ…YIPD. Serine 11 bears the Phosphoserine mark. Residues 156–188 form a disordered region; that stretch reads PDEEVSSPSPPQRAQRGDHSSREQGHAPGGTSQ. A phosphoserine mark is found at serine 162 and serine 164. Residues 170 to 180 show a composition bias toward basic and acidic residues; the sequence is QRGDHSSREQG. KH domains follow at residues 193-258, 274-341, 384-449, and 466-532; these read DFPL…CRMI, EIPL…EIEI, QEIV…QGRI, and KLEA…QRKI. Threonine 507 bears the Phosphothreonine mark.

Belongs to the RRM IMP/VICKZ family. In terms of assembly, can form homooligomers and heterooligomers with IGF2BP1 and IGF2BP3 in an RNA-dependent manner. Interacts with HNRPD. Interacts with IGF2BP1. Interacts with ELAVL1, DHX9, HNRNPU, MATR3 and PABPC1.

The protein localises to the nucleus. It localises to the cytoplasm. The protein resides in the P-body. Its subcellular location is the stress granule. RNA-binding factor that recruits target transcripts to cytoplasmic protein-RNA complexes (mRNPs). This transcript 'caging' into mRNPs allows mRNA transport and transient storage. It also modulates the rate and location at which target transcripts encounter the translational apparatus and shields them from endonuclease attacks or microRNA-mediated degradation. Preferentially binds to N6-methyladenosine (m6A)-containing mRNAs and increases their stability. Binds to the 5'-UTR of the insulin-like growth factor 2 (IGF2) mRNAs. Binding is isoform-specific. Binds to beta-actin/ACTB and MYC transcripts. Increases MYC mRNA stability by binding to the coding region instability determinant (CRD) and binding is enhanced by m6A-modification of the CRD. This is Insulin-like growth factor 2 mRNA-binding protein 2 (IGF2BP2) from Pongo abelii (Sumatran orangutan).